Consider the following 478-residue polypeptide: Alcohol dehydrogenase (quinone), cytochrome c subunit (478 aa).

Residues Met1–Ala36 form the signal peptide. At Gln37 the chain carries Pyrrolidone carboxylic acid. 3 consecutive Cytochrome c domains span residues Ala42–Val145, Pro189–Pro304, and Gly327–Trp417. Residues Cys56, Cys59, His60, Cys204, Cys207, His208, Cys340, Cys343, and His344 each contribute to the heme c site.

As to quaternary structure, the alcohol dehydrogenase multicomponent enzyme system is composed of a dehydrogenase subunit I (AdhA), a cytochrome c subunit II (AdhB) and a subunit III (AdhS). It depends on heme c as a cofactor.

The protein resides in the cell membrane. It carries out the reaction ethanol + a ubiquinone = a ubiquinol + acetaldehyde. With respect to regulation, 2,6-dichloro-4-dicyanovinylphenol (PC16) and antimycin A inhibit ubiquinol oxidation activity more selectively than the ubiquinone reductase activity. Functionally, cytochrome c component of the alcohol dehydrogenase multicomponent enzyme system which is involved in the production of acetic acid and in the ethanol oxidase respiratory chain. Quinohemoprotein alcohol dehydrogenase (ADH) catalyzes the oxidation of ethanol to acetaldehyde by transferring electrons to the ubiquinone embedded in the membrane phospholipids. The electrons transfer from ethanol to membranous ubiquinone occurs from pyrroloquinoline quinone (PQQ) to one heme c in subunit I (AdhA), and finally to two heme c in subunit II (AdhB). Besides ubiquinone reduction, ADH also has a ubiquinol (QH2) oxidation reaction which mediates electron transfer from ubiquinol to the non-energy generating bypass oxidase system. The electrons transfer occurs from ubiquinol (QH2) to the additional heme c within subunit II (AdhB). Also able to use quinone analogs such as 2,3-dimethoxy-5-methyl-6-n-decyl-1,4-benzoquinone (DB) and 2,3-dimethoxy-5-methyl-6-n-pentyl-1,4-benzoquinone (PB). The sequence is that of Alcohol dehydrogenase (quinone), cytochrome c subunit from Gluconobacter oxydans (strain 621H) (Gluconobacter suboxydans).